A 381-amino-acid polypeptide reads, in one-letter code: Probable envelope ADP,ATP carrier protein, chloroplastic (381 aa).

A chloroplast-targeting transit peptide spans 1 to 26 (MEEDRAILTFHRIPSLNSSLITTSSP). 5 helical membrane passes run 78-98 (LAIL…ALAG), 154-179 (LPQV…NLFK), 191-211 (LAAG…LDVL), 237-257 (IASF…YIAV), and 281-301 (LLTA…LDTV). 3 Solcar repeats span residues 85-177 (PKDA…YKNL), 185-268 (LSVI…VKKS), and 279-359 (SSLL…VKRL). An ADP-binding site is contributed by Arg159. Arg302 provides a ligand contact to ADP. The helical transmembrane segment at 334-360 (GFLPNALKTLPNSSIRLTTFDMVKRLI) threads the bilayer.

This sequence belongs to the mitochondrial carrier (TC 2.A.29) family.

It localises to the plastid. The protein localises to the chloroplast membrane. In terms of biological role, transports adenine nucleotides. The polypeptide is Probable envelope ADP,ATP carrier protein, chloroplastic (EAAC) (Arabidopsis thaliana (Mouse-ear cress)).